The sequence spans 120 residues: Cell division protein FtsL (120 aa).

The segment at 1–22 is disordered; it reads MSNVAYKSNLEPNRVHREAEQP. Over 1–37 the chain is Cytoplasmic; sequence MSNVAYKSNLEPNRVHREAEQPKKQILKRGQMTLGEK. Residues 13-22 are compositionally biased toward basic and acidic residues; it reads NRVHREAEQP. Residues 38–58 traverse the membrane as a helical segment; it reads VIITIALAIVLVVAFRIISVQ. Topologically, residues 59–120 are extracellular; sequence AQIYTVNQEI…GDNVKVVDGQ (62 aa).

Belongs to the FtsL family.

The protein resides in the cell membrane. Essential cell division protein. In Listeria monocytogenes serovar 1/2a (strain ATCC BAA-679 / EGD-e), this protein is Cell division protein FtsL.